A 375-amino-acid chain; its full sequence is Biotin synthase, mitochondrial (375 aa).

Residues 1 to 16 (MMSTIYRHLSTARPAL) constitute a mitochondrion transit peptide. The region spanning 81 to 310 (HDPTKVQLCT…IATARIVMPK (230 aa)) is the Radical SAM core domain. 3 residues coordinate [4Fe-4S] cluster: Cys99, Cys103, and Cys106. [2Fe-2S] cluster is bound by residues Cys143, Cys176, Cys236, and Arg314.

Belongs to the radical SAM superfamily. Biotin synthase family. [4Fe-4S] cluster is required as a cofactor. The cofactor is [2Fe-2S] cluster.

The protein resides in the mitochondrion. It catalyses the reaction (4R,5S)-dethiobiotin + (sulfur carrier)-SH + 2 reduced [2Fe-2S]-[ferredoxin] + 2 S-adenosyl-L-methionine = (sulfur carrier)-H + biotin + 2 5'-deoxyadenosine + 2 L-methionine + 2 oxidized [2Fe-2S]-[ferredoxin]. It functions in the pathway cofactor biosynthesis; biotin biosynthesis; biotin from 7,8-diaminononanoate: step 2/2. The sequence is that of Biotin synthase, mitochondrial (BIO2) from Saccharomyces cerevisiae (strain ATCC 204508 / S288c) (Baker's yeast).